A 464-amino-acid polypeptide reads, in one-letter code: ATP synthase subunit beta (464 aa).

ATP is bound at residue 148–155 (GGAGVGKT).

Belongs to the ATPase alpha/beta chains family. F-type ATPases have 2 components, CF(1) - the catalytic core - and CF(0) - the membrane proton channel. CF(1) has five subunits: alpha(3), beta(3), gamma(1), delta(1), epsilon(1). CF(0) has three main subunits: a(1), b(2) and c(9-12). The alpha and beta chains form an alternating ring which encloses part of the gamma chain. CF(1) is attached to CF(0) by a central stalk formed by the gamma and epsilon chains, while a peripheral stalk is formed by the delta and b chains.

The protein localises to the cell inner membrane. It catalyses the reaction ATP + H2O + 4 H(+)(in) = ADP + phosphate + 5 H(+)(out). Its function is as follows. Produces ATP from ADP in the presence of a proton gradient across the membrane. The catalytic sites are hosted primarily by the beta subunits. The protein is ATP synthase subunit beta of Acinetobacter baumannii (strain AB0057).